The sequence spans 484 residues: tRNA sulfurtransferase (484 aa).

Positions 63 to 167 constitute a THUMP domain; sequence QAFGERLACI…RDKLYMVTKR (105 aa). ATP-binding positions include 185–186, lysine 267, glycine 289, and glutamine 298; that span reads LI. Cysteine 346 and cysteine 458 are disulfide-bonded. A Rhodanese domain is found at 406–484; that stretch reads IETNEVVIDI…GYTNVKVYRP (79 aa). Cysteine 458 acts as the Cysteine persulfide intermediate in catalysis.

This sequence belongs to the ThiI family.

Its subcellular location is the cytoplasm. The catalysed reaction is [ThiI sulfur-carrier protein]-S-sulfanyl-L-cysteine + a uridine in tRNA + 2 reduced [2Fe-2S]-[ferredoxin] + ATP + H(+) = [ThiI sulfur-carrier protein]-L-cysteine + a 4-thiouridine in tRNA + 2 oxidized [2Fe-2S]-[ferredoxin] + AMP + diphosphate. It catalyses the reaction [ThiS sulfur-carrier protein]-C-terminal Gly-Gly-AMP + S-sulfanyl-L-cysteinyl-[cysteine desulfurase] + AH2 = [ThiS sulfur-carrier protein]-C-terminal-Gly-aminoethanethioate + L-cysteinyl-[cysteine desulfurase] + A + AMP + 2 H(+). It functions in the pathway cofactor biosynthesis; thiamine diphosphate biosynthesis. Functionally, catalyzes the ATP-dependent transfer of a sulfur to tRNA to produce 4-thiouridine in position 8 of tRNAs, which functions as a near-UV photosensor. Also catalyzes the transfer of sulfur to the sulfur carrier protein ThiS, forming ThiS-thiocarboxylate. This is a step in the synthesis of thiazole, in the thiamine biosynthesis pathway. The sulfur is donated as persulfide by IscS. The protein is tRNA sulfurtransferase of Shewanella putrefaciens (strain CN-32 / ATCC BAA-453).